We begin with the raw amino-acid sequence, 673 residues long: G-protein-signaling modulator 1 (673 aa).

Residues 1-507 form a mediates association with membranes region; sequence MASPAPPVAE…DLLSKFQSSR (507 aa). TPR repeat units follow at residues 28–61, 66–99, 106–139, 146–178, 180–199, 206–239, 246–279, 286–319, and 326–359; these read CLEL…GTED, SAIY…ARTI, AKAS…AQEQ, ARAL…PPDV, ETLH…VKEL, GRAY…AKEF, RRAY…SRQL, AQAC…AQEL, and GRAC…SQEI. The segment at 361–485 is interaction with STK11/LKB1; that stretch reads DRNGELTARM…VRVQVPRTGI (125 aa). Phosphoserine is present on Ser410. The residue at position 418 (Arg418) is an Omega-N-methylarginine. Residues 420 to 439 are compositionally biased toward basic and acidic residues; the sequence is PLDREQNGETHHTGDWRGPG. Residues 420–475 are disordered; sequence PLDREQNGETHHTGDWRGPGRDSLPLPMRSRKYQEGPDAIERRPREGSHSPLDSAD. Phosphoserine is present on residues Ser442, Ser467, Ser469, Ser490, and Ser491. The span at 451–467 shows a compositional bias: basic and acidic residues; the sequence is KYQEGPDAIERRPREGS. Positions 493–515 constitute a GoLoco 1 domain; it reads EECFFDLLSKFQSSRMDDQRCPL. Residues 508-531 form a disordered region; that stretch reads MDDQRCPLEEGQAGAAEATAAPSV. The segment covering 516 to 528 has biased composition (low complexity); that stretch reads EEGQAGAAEATAA. Residues Ser543 and Ser567 each carry the phosphoserine modification. GoLoco domains lie at 546-568, 594-616, and 628-650; these read TEEF…RASV, GDEF…RCPP, and DEDF…RVDL. The segment at 644 to 673 is disordered; the sequence is DEQRVDLAGSPEQEASGLPDPQQQCPPGAS. Ser653 is modified (phosphoserine). A compositionally biased stretch (polar residues) spans 664-673; sequence PQQQCPPGAS.

The protein belongs to the GPSM family. Interacts with GNAI1 and GNAI2 preferentially in their GDP-bound state. May also interact with GNAO1. Interacts with INSC/inscuteable and FRMPD1. Interacts with GNAI3. Interacts with STK11/LKB1 and MACF1. Post-translationally, phosphorylation regulates interaction with G(i/o) alpha. Expressed in neural progenitor cells (at protein level).

It localises to the cytoplasm. Its subcellular location is the cytosol. The protein localises to the endoplasmic reticulum membrane. It is found in the golgi apparatus membrane. The protein resides in the cell membrane. In terms of biological role, guanine nucleotide dissociation inhibitor (GDI) which functions as a receptor-independent activator of heterotrimeric G-protein signaling. Keeps G(i/o) alpha subunit in its GDP-bound form thus uncoupling heterotrimeric G-proteins signaling from G protein-coupled receptors. Controls spindle orientation and asymmetric cell fate of cerebral cortical progenitors. May also be involved in macroautophagy in intestinal cells. May play a role in drug addiction. This is G-protein-signaling modulator 1 (Gpsm1) from Mus musculus (Mouse).